Consider the following 861-residue polypeptide: Homeobox-leucine zipper protein HOX29 (861 aa).

Residues 2 to 65 (DASKYVRYTP…NRRCREKQRK (64 aa)) constitute a DNA-binding region (homeobox). Residues 57-99 (RRCREKQRKESSRLQALNRKLTAMNKLLMEENDRLQKQVSQLV) are a coiled coil. The region spanning 162–390 (RDASPAGLMS…VAHEDTRSVI (229 aa)) is the START domain.

Belongs to the HD-ZIP homeobox family. Class III subfamily. As to expression, expressed in roots, stems and leaf blades.

It localises to the nucleus. In terms of biological role, probable transcription factor. The sequence is that of Homeobox-leucine zipper protein HOX29 (HOX29) from Oryza sativa subsp. indica (Rice).